A 414-amino-acid chain; its full sequence is Serine hydroxymethyltransferase (414 aa).

Residues leucine 117 and 121–123 (GHL) contribute to the (6S)-5,6,7,8-tetrahydrofolate site. Lysine 226 carries the N6-(pyridoxal phosphate)lysine modification. (6S)-5,6,7,8-tetrahydrofolate-binding positions include glutamate 241 and 349–351 (TPF).

Belongs to the SHMT family. Homodimer. The cofactor is pyridoxal 5'-phosphate.

The protein localises to the cytoplasm. The catalysed reaction is (6R)-5,10-methylene-5,6,7,8-tetrahydrofolate + glycine + H2O = (6S)-5,6,7,8-tetrahydrofolate + L-serine. The protein operates within one-carbon metabolism; tetrahydrofolate interconversion. It participates in amino-acid biosynthesis; glycine biosynthesis; glycine from L-serine: step 1/1. In terms of biological role, catalyzes the reversible interconversion of serine and glycine with tetrahydrofolate (THF) serving as the one-carbon carrier. Also exhibits THF-independent aldolase activity toward beta-hydroxyamino acids, producing glycine and aldehydes, via a retro-aldol mechanism. In Methanothrix thermoacetophila (strain DSM 6194 / JCM 14653 / NBRC 101360 / PT) (Methanosaeta thermophila), this protein is Serine hydroxymethyltransferase.